A 275-amino-acid polypeptide reads, in one-letter code: Large ribosomal subunit protein uL2 (275 aa).

Disordered stretches follow at residues 24–47 and 227–261; these read IHKGSPHASLLESQSKTGGRNHHG and PVDHPHGGGEAKSGQGNPHPVTPWGVPTKGYKTRK.

The protein belongs to the universal ribosomal protein uL2 family. Part of the 50S ribosomal subunit. Forms a bridge to the 30S subunit in the 70S ribosome.

Its function is as follows. One of the primary rRNA binding proteins. Required for association of the 30S and 50S subunits to form the 70S ribosome, for tRNA binding and peptide bond formation. It has been suggested to have peptidyltransferase activity; this is somewhat controversial. Makes several contacts with the 16S rRNA in the 70S ribosome. The polypeptide is Large ribosomal subunit protein uL2 (Xylella fastidiosa (strain M12)).